Consider the following 536-residue polypeptide: Cytochrome P450 78A7 (536 aa).

The chain crosses the membrane as a helical span at residues 36 to 56; that stretch reads LFLAVVFLSIVTWALAGGGGV. Cys481 is a heme binding site.

The protein belongs to the cytochrome P450 family. The cofactor is heme.

Its subcellular location is the membrane. Its function is as follows. Functions probably in association with CYP78A5 in regulating relative growth of the shoot apical meristem and plant organs via a non-cell-autonomous signal. The sequence is that of Cytochrome P450 78A7 (CYP78A7) from Arabidopsis thaliana (Mouse-ear cress).